Consider the following 703-residue polypeptide: Elongation factor G (703 aa).

In terms of domain architecture, tr-type G spans 9 to 292; the sequence is ERTRNIGIMA…AVVDYLPGPL (284 aa). GTP contacts are provided by residues 18-25, 91-95, and 145-148; these read AHIDAGKT, DTPGH, and NKMD.

Belongs to the TRAFAC class translation factor GTPase superfamily. Classic translation factor GTPase family. EF-G/EF-2 subfamily.

The protein resides in the cytoplasm. Its function is as follows. Catalyzes the GTP-dependent ribosomal translocation step during translation elongation. During this step, the ribosome changes from the pre-translocational (PRE) to the post-translocational (POST) state as the newly formed A-site-bound peptidyl-tRNA and P-site-bound deacylated tRNA move to the P and E sites, respectively. Catalyzes the coordinated movement of the two tRNA molecules, the mRNA and conformational changes in the ribosome. This Leuconostoc citreum (strain KM20) protein is Elongation factor G.